The primary structure comprises 1220 residues: Myosin-2 (1220 aa).

The segment covering Met-1 to Lys-12 has biased composition (polar residues). Disordered regions lie at residues Met-1–Ser-54 and Gln-68–Lys-95. Residues Glu-20–Asp-33 show a composition bias toward basic and acidic residues. Residues Ser-40 to Ser-54 show a composition bias toward low complexity. Over residues Glu-82 to Lys-95 the composition is skewed to basic and acidic residues. One can recognise a Myosin N-terminal SH3-like domain in the interval Lys-160–Pro-209. Residues Glu-213–Lys-879 enclose the Myosin motor domain. ATP-binding positions include Gly-304–Thr-311 and Asn-353–Lys-361. Actin-binding stretches follow at residues Leu-638–Leu-672 and Leu-759–Ser-781. 3 IQ domains span residues Val-881–Val-910, Met-904–Asp-933, and Glu-942–Leu-971. 2 disordered regions span residues Gln-968 to Leu-1007 and Ser-1075 to Thr-1118. Polar residues-rich tracts occupy residues Pro-997 to Asp-1006 and Thr-1098 to Thr-1118. A coiled-coil region spans residues Ser-1003–Leu-1071.

Belongs to the TRAFAC class myosin-kinesin ATPase superfamily. Myosin family. Plant myosin class VIII subfamily. Homodimer. As to expression, expressed in flowers, leaves and roots.

The protein resides in the cell junction. Its subcellular location is the plasmodesma. The protein localises to the endosome. In terms of biological role, myosin heavy chain that is required for the cell cycle-regulated transport of various organelles and proteins for their segregation. Functions by binding with its tail domain to receptor proteins on organelles and exerting force with its N-terminal motor domain against actin filaments, thereby transporting its cargo along polarized actin cables. Involved in endocytosis via its action in endosomal trafficking. The sequence is that of Myosin-2 (VIII-2) from Arabidopsis thaliana (Mouse-ear cress).